The primary structure comprises 284 residues: Bifunctional protein FolD (284 aa).

Residues 165–167 (GRS), Ser-190, and Val-231 each bind NADP(+).

The protein belongs to the tetrahydrofolate dehydrogenase/cyclohydrolase family. As to quaternary structure, homodimer.

The enzyme catalyses (6R)-5,10-methylene-5,6,7,8-tetrahydrofolate + NADP(+) = (6R)-5,10-methenyltetrahydrofolate + NADPH. It carries out the reaction (6R)-5,10-methenyltetrahydrofolate + H2O = (6R)-10-formyltetrahydrofolate + H(+). It participates in one-carbon metabolism; tetrahydrofolate interconversion. Functionally, catalyzes the oxidation of 5,10-methylenetetrahydrofolate to 5,10-methenyltetrahydrofolate and then the hydrolysis of 5,10-methenyltetrahydrofolate to 10-formyltetrahydrofolate. This is Bifunctional protein FolD from Bacillus licheniformis (strain ATCC 14580 / DSM 13 / JCM 2505 / CCUG 7422 / NBRC 12200 / NCIMB 9375 / NCTC 10341 / NRRL NRS-1264 / Gibson 46).